We begin with the raw amino-acid sequence, 274 residues long: 16S rRNA (guanine(1405)-N(7))-methyltransferase (274 aa).

S-adenosyl-L-methionine is bound by residues Phe-64, 102 to 104, Arg-108, Ala-133, Asp-156, 182 to 183, Leu-198, and Gln-207; these read HVS and DL.

Belongs to the methyltransferase superfamily. Aminoglycoside resistance family.

It catalyses the reaction guanosine(1405) in 16S rRNA + S-adenosyl-L-methionine = N(7)-methylguanosine(1405) in 16S rRNA + S-adenosyl-L-homocysteine. Specifically methylates the N(7) position of guanine 1405 in 16S rRNA. Confers resistance to various aminoglycosides, including gentamicin and kanamycin. The sequence is that of 16S rRNA (guanine(1405)-N(7))-methyltransferase (grm) from Micromonospora echinospora (Micromonospora purpurea).